The sequence spans 266 residues: Diphthine synthase (266 aa).

S-adenosyl-L-methionine is bound by residues leucine 9, aspartate 85, isoleucine 88, 113–114, leucine 168, alanine 210, and histidine 235; that span reads TA.

The protein belongs to the diphthine synthase family. As to quaternary structure, homodimer.

It carries out the reaction 2-[(3S)-amino-3-carboxypropyl]-L-histidyl-[translation elongation factor 2] + 3 S-adenosyl-L-methionine = diphthine-[translation elongation factor 2] + 3 S-adenosyl-L-homocysteine + 3 H(+). It participates in protein modification; peptidyl-diphthamide biosynthesis. Its function is as follows. S-adenosyl-L-methionine-dependent methyltransferase that catalyzes the trimethylation of the amino group of the modified target histidine residue in translation elongation factor 2 (EF-2), to form an intermediate called diphthine. The three successive methylation reactions represent the second step of diphthamide biosynthesis. This Natronomonas pharaonis (strain ATCC 35678 / DSM 2160 / CIP 103997 / JCM 8858 / NBRC 14720 / NCIMB 2260 / Gabara) (Halobacterium pharaonis) protein is Diphthine synthase.